The chain runs to 815 residues: Tubulin polyglutamylase TTLL13 (815 aa).

Residues 85–430 form the TTL domain; that stretch reads RRSLAINLTN…RGCDKRKVME (346 aa). ATP is bound by residues lysine 202, 208–209, 230–233, and 243–245; these read QG, QQYI, and KFD. A protein is bound at residue glutamine 208. Arginine 269 provides a ligand contact to L-glutamate. 291-292 serves as a coordination point for ATP; the sequence is TN. 2 residues coordinate L-glutamate: tyrosine 293 and lysine 311. Aspartate 376, glutamate 389, and asparagine 391 together coordinate Mg(2+). The interval 401–482 is c-MTBD region; it reads CLDQEVKDAL…LGKYRRIYPG (82 aa). Position 407 (lysine 407) interacts with L-glutamate. The stretch at 504–528 forms a coiled coil; it reads ASKAREECARQQLEEIRLKQEQQET. The disordered stretch occupies residues 520 to 556; it reads RLKQEQQETSGTKRQKARDQNQGESAGEKSRPRAGLQ. Residues 536–550 show a composition bias toward basic and acidic residues; it reads ARDQNQGESAGEKSR.

Belongs to the tubulin--tyrosine ligase family. Mg(2+) is required as a cofactor.

It catalyses the reaction (L-glutamyl)(n)-gamma-L-glutamyl-L-glutamyl-[protein] + L-glutamate + ATP = (L-glutamyl)(n+1)-gamma-L-glutamyl-L-glutamyl-[protein] + ADP + phosphate + H(+). Polyglutamylase which modifies tubulin, generating polyglutamate side chains of variable lengths on the gamma-carboxyl group of specific glutamate residues within the C-terminal tail of tubulin. Mediates ATP-dependent polyglutamate side-chain elongation of the polyglutamylation reaction but not the initiation step. Preferentially modifies the alpha-tubulin tail over a beta-tail. This is Tubulin polyglutamylase TTLL13 from Homo sapiens (Human).